Here is a 219-residue protein sequence, read N- to C-terminus: MQAYKKDFLDLATKYEALKFGSFTLKSGRTSPYFFNLGLFNTGVALSTVGASFAQVIINSGVEFDVIFGPAYKGIPLAAVTAAKIAELGGEKYATKEYAFNRKEAKDHGEGGNIVGASLKGKKVLIIDDVITAGTAIKEAFSIIDANGATVSAVVIALDRQETTVDSPKSAVQVVSQTYNVPVLNIFNLNDVIQYTDGILTEDEKKKIEQYRDQYSPKE.

Position 26 (K26) interacts with 5-phospho-alpha-D-ribose 1-diphosphate. Residue 34 to 35 participates in orotate binding; sequence FF. Residues 72-73, R102, K103, K106, H108, and 128-136 contribute to the 5-phospho-alpha-D-ribose 1-diphosphate site; these read YK and DDVITAGTA. Positions 132 and 160 each coordinate orotate.

The protein belongs to the purine/pyrimidine phosphoribosyltransferase family. PyrE subfamily. In terms of assembly, homodimer.

It catalyses the reaction orotidine 5'-phosphate + diphosphate = orotate + 5-phospho-alpha-D-ribose 1-diphosphate. The protein operates within pyrimidine metabolism; UMP biosynthesis via de novo pathway; UMP from orotate: step 1/2. In terms of biological role, catalyzes the transfer of a ribosyl phosphate group from 5-phosphoribose 1-diphosphate to orotate, leading to the formation of orotidine monophosphate (OMP). The chain is Orotate phosphoribosyltransferase (URA5) from Yarrowia lipolytica (strain CLIB 122 / E 150) (Yeast).